The following is a 186-amino-acid chain: Translation initiation factor IF-3 (186 aa).

This sequence belongs to the IF-3 family. As to quaternary structure, monomer.

It is found in the cytoplasm. IF-3 binds to the 30S ribosomal subunit and shifts the equilibrium between 70S ribosomes and their 50S and 30S subunits in favor of the free subunits, thus enhancing the availability of 30S subunits on which protein synthesis initiation begins. This is Translation initiation factor IF-3 from Borreliella afzelii (strain PKo) (Borrelia afzelii).